The following is a 341-amino-acid chain: G2/mitotic-specific cyclin C13-1 (341 aa).

This sequence belongs to the cyclin family. Cyclin AB subfamily.

Essential for the control of the cell cycle at the G2/M (mitosis) transition. Interacts with the CDC2 and CDK2 protein kinases to form MPF. G2/M cyclins accumulate steadily during G2 and are abruptly destroyed at mitosis. This Daucus carota (Wild carrot) protein is G2/mitotic-specific cyclin C13-1.